A 402-amino-acid chain; its full sequence is MKRQNVRTLSLIACTFTYLLVGAAVFDALESDHEMREEEKLKAEEVRLRGKYNISSDDYQQLELVILQSEPHRAGVQWKFAGSFYFAITVITTIGYGHAAPGTDAGKAFCMFYAVLGIPLTLVMFQSLGERMNTFVRYLLKRIKKCCGMRNTEVSMENMVTVGFFSCMGTLCLGAAAFSQCEDWSFFHAYYYCFITLTTIGFGDFVALQAKGALQRKPFYVAFSFMYILVGLTVIGAFLNLVVLRFLTMNTDEELLEGEVAEILAGNPRRVSVRAPQRRKRHHAMYFLRKYGRTLCYLCFPGTNWGKDDDDDDDDDVVDNVVVTAPISAPAPAPAPAPAPAAVAAGATIRSVRATVHTVSCRVEEIPPDVLRNTYFRSVFGAIPPGMHTCGDHRLHLRRKSI.

The Cytoplasmic segment spans residues 1 to 8 (MKRQNVRT). The helical transmembrane segment at 9–29 (LSLIACTFTYLLVGAAVFDAL) threads the bilayer. At 30–88 (ESDHEMREEEKLKAEEVRLRGKYNISSDDYQQLELVILQSEPHRAGVQWKFAGSFYFAI) the chain is on the extracellular side. N53 carries N-linked (GlcNAc...) asparagine glycosylation. Positions 89–101 (TVITTIGYGHAAP) form an intramembrane region, pore-forming. The K(+) site is built by T93, I94, G95, and Y96. Residues 93-98 (TIGYGH) form a selectivity filter 1 region. The Extracellular segment spans residues 102–107 (GTDAGK). Residues 108–128 (AFCMFYAVLGIPLTLVMFQSL) form a helical membrane-spanning segment. Residues 129-158 (GERMNTFVRYLLKRIKKCCGMRNTEVSMEN) are Cytoplasmic-facing. Residues 159–179 (MVTVGFFSCMGTLCLGAAAFS) form a helical membrane-spanning segment. Topologically, residues 180 to 194 (QCEDWSFFHAYYYCF) are extracellular. An intramembrane region (pore-forming) is located at residues 195–207 (ITLTTIGFGDFVA). Residues T199, I200, G201, and F202 each coordinate K(+). The selectivity filter 2 stretch occupies residues 199–204 (TIGFGD). At 208 to 218 (LQAKGALQRKP) the chain is on the extracellular side. A helical membrane pass occupies residues 219–239 (FYVAFSFMYILVGLTVIGAFL). Residues 240–402 (NLVVLRFLTM…HRLHLRRKSI (163 aa)) are Cytoplasmic-facing. The segment at 243 to 248 (VLRFLT) is X-gate.

Belongs to the two pore domain potassium channel (TC 1.A.1.8) family. Homodimer. Heterodimer with KCNK1. Heterodimer with KCNK3. Expressed in adrenal glands mainly in outer zona glomerulosa and inner zona medullaris. Expressed in retinal ganglion cells. Expressed in dentate gyrus (at protein level).

The protein localises to the cell membrane. It localises to the mitochondrion inner membrane. It is found in the cell projection. Its subcellular location is the dendrite. The catalysed reaction is K(+)(in) = K(+)(out). It catalyses the reaction Na(+)(in) = Na(+)(out). With respect to regulation, inhibited by NTS:NTSR1 signaling in dentate gyrus granule cells. Functionally, k(+) channel that conducts voltage-dependent outward rectifying currents upon membrane depolarization. Voltage sensing is coupled to K(+) electrochemical gradient in an 'ion flux gating' mode where outward but not inward ion flow opens the gate. Changes ion selectivity and becomes permeable to Na(+) ions in response to extracellular acidification. Protonation of the pH sensor His-98 stabilizes C-type inactivation conformation likely converting the channel from outward K(+)-conducting, to inward Na(+)-conducting to nonconductive state. Homo- and heterodimerizes to form functional channels with distinct regulatory and gating properties. Allows K(+) currents with fast-gating kinetics important for the repolarization and hyperpolarization phases of action potentials. In granule neurons, hyperpolarizes the resting membrane potential to limit intrinsic neuronal excitability, but once the action potential threshold is reached, supports high-frequency action potential firing and increased neuronal excitability. Homomeric and/or heteromeric KCNK3:KCNK9 channels operate in cerebellar granule cells, whereas heteromeric KCNK1:KCNK9 enables currents in hippocampal dentate gyrus granule neurons. Dispensable for central chemosensory respiration i.e. breathing controlled by brainstem CO2/pH, it rather conducts pH-sensitive currents and controls the firing rate of serotonergic raphe neurons involved in potentiation of the respiratory chemoreflex. In retinal ganglion cells, mediates outward rectifying currents that regulate action potentials in response to acidification of the synaptic cleft. Involved in transmission of image-forming and nonimage-forming visual information in the retina. In adrenal gland, contributes to the maintenance of a hyperpolarized resting membrane potential of aldosterone-producing cells at zona glomerulosa and limits aldosterone release as part of a regulatory mechanism that controls arterial blood pressure and electrolyte homeostasis. The chain is Potassium channel subfamily K member 9 from Mus musculus (Mouse).